A 345-amino-acid polypeptide reads, in one-letter code: DNA primase small subunit PriS (345 aa).

Active-site residues include D95 and D97. Positions 106, 108, 114, and 117 each coordinate Zn(2+). The short motif at 106–117 (CNHEPGKVCPIC) is the Zinc knuckle motif element. Residue D280 is part of the active site.

This sequence belongs to the eukaryotic-type primase small subunit family. Heterodimer of a small subunit (PriS) and a large subunit (PriL). Requires Mg(2+) as cofactor. Mn(2+) is required as a cofactor.

Catalytic subunit of DNA primase, an RNA polymerase that catalyzes the synthesis of short RNA molecules used as primers for DNA polymerase during DNA replication. The small subunit contains the primase catalytic core and has DNA synthesis activity on its own, synthesizing DNA strands up to 3 kB. Binding to the large subunit stabilizes and modulates the activity, increasing the rate of DNA synthesis while decreasing the length of the DNA fragments, and conferring RNA synthesis capability for RNA fragments up to 150 bases. The DNA polymerase activity may enable DNA primase to also catalyze primer extension after primer synthesis. May also play a role in DNA repair. Displays gap-filling and strand-displacement activities. The chain is DNA primase small subunit PriS from Pyrococcus abyssi (strain GE5 / Orsay).